The chain runs to 245 residues: MPTTNIKELLEAGAHFGHQTSRWHPRMKKYIFTKRNGIHIIDLEKTVVMLDKACNYINQVVSDGGKVLFVGTKKQAQEILAEEAKRCGMYFINQRWTGGILTNFHSIQSRIDYLVRLEDQQARGDFSRLPKKEAQKLGEEIARLNRTMGGFKEMTRLPDVIFVVDPIKEKIAMAEAKRMGVPLVAMVDTNCNPDEVDYPVPSNDDAMRAIKLICSKMADAVIEAQNAMKVTEVETTGEAQAETAG.

Belongs to the universal ribosomal protein uS2 family.

This Dehalococcoides mccartyi (strain CBDB1) protein is Small ribosomal subunit protein uS2.